The chain runs to 694 residues: Elongation factor G (694 aa).

The tr-type G domain maps to 8-287 (EDYRNFGIMA…AVVEFLPAPT (280 aa)). GTP contacts are provided by residues 17 to 24 (AHIDAGKT), 86 to 90 (DTPGH), and 140 to 143 (NKMD).

It belongs to the TRAFAC class translation factor GTPase superfamily. Classic translation factor GTPase family. EF-G/EF-2 subfamily.

The protein localises to the cytoplasm. Its function is as follows. Catalyzes the GTP-dependent ribosomal translocation step during translation elongation. During this step, the ribosome changes from the pre-translocational (PRE) to the post-translocational (POST) state as the newly formed A-site-bound peptidyl-tRNA and P-site-bound deacylated tRNA move to the P and E sites, respectively. Catalyzes the coordinated movement of the two tRNA molecules, the mRNA and conformational changes in the ribosome. The protein is Elongation factor G of Brucella abortus (strain S19).